The following is a 663-amino-acid chain: DNA topoisomerase 4 subunit B (663 aa).

ATP-binding positions include tyrosine 21, asparagine 61, aspartate 88, 130–136 (GLHGVGI), and lysine 360. The Toprim domain occupies 440 to 554 (TELFIVEGDS…EGHLYLAKPP (115 aa)). The Mg(2+) site is built by glutamate 446, aspartate 519, and aspartate 521.

The protein belongs to the type II topoisomerase family. ParE type 1 subfamily. In terms of assembly, heterotetramer composed of ParC and ParE. Mg(2+) is required as a cofactor. The cofactor is Mn(2+). It depends on Ca(2+) as a cofactor.

It carries out the reaction ATP-dependent breakage, passage and rejoining of double-stranded DNA.. Topoisomerase IV is essential for chromosome segregation. It relaxes supercoiled DNA. Performs the decatenation events required during the replication of a circular DNA molecule. In Rickettsia typhi (strain ATCC VR-144 / Wilmington), this protein is DNA topoisomerase 4 subunit B.